Consider the following 476-residue polypeptide: Sensor protein CzcS (476 aa).

An N-terminal signal peptide occupies residues 1 to 35 (MRPGTSITPLSLTRRLGLFFALVLSIALASMGAFA). Topologically, residues 37-158 (YSLAAQLEAR…DRKQVTARFR (122 aa)) are periplasmic. A helical membrane pass occupies residues 159-179 (TTLVLGTTVGVILTALVGAAI). Residues 180–476 (TRRELEPAHV…RPSQDRPVVG (297 aa)) lie on the Cytoplasmic side of the membrane. Residues 181-234 (RRELEPAHVLIKQINRISVERLSYRVDMPPKPTEVRDIASAFNAMLQRLEDGYQ) enclose the HAMP domain. A Histidine kinase domain is found at 242-455 (DLAHDLRTPL…TRFTLRFPLN (214 aa)). His245 carries the post-translational modification Phosphohistidine; by autocatalysis.

It localises to the cell inner membrane. It catalyses the reaction ATP + protein L-histidine = ADP + protein N-phospho-L-histidine.. Its function is as follows. Member of the two-component regulatory system CzcS/CzcR involved in the control of cobalt, zinc and cadmium homeostasis. Probably activates CzcR by phosphorylation. This Cupriavidus metallidurans (strain ATCC 43123 / DSM 2839 / NBRC 102507 / CH34) (Ralstonia metallidurans) protein is Sensor protein CzcS (czcS).